We begin with the raw amino-acid sequence, 488 residues long: MAETTSLINEPDVDFHLKLNQHSFNIPYEQLQRNSRYLNRLIEKEIDELNSHYERLNIALGSGNIEGDKKALQELKDIIRSVEIFEKRLQKRVNEEVPILKRLEVRINFFKELENAKQQVADITPLMEWYLKFTNILIGDYLTRHTTSNSSPELGLPGVTFLEQEGIQDLLDTDILLTGNRISTALVDNHDLRPLLDWINDSKSYLKKNGSRLEFEARFQQYIELLKASEYEEAIKCFQDYLLKFVNTNFNELTHASGLLLSINYCKEIMKAKASERSAILTKDDGNPLENEIRAYKYFFHKKPKIVEQQHVKPVDLSYMNLSQNTDFEKYMLLLDDKRWGLLNELFLKDYYSLYGISQNDPLLIYLSLGISTLKTRECLHHRRVAKSSSPLVDKKVEEEVLQNSCPVCDKTFAPIAESLPFAHHTQSQLFDDPIMLPNGNIYEAKRLKRLAKYLVDIKAIELGETEVIDPIDKQIYNEADFITMYPT.

Positions 175–233 (ILLTGNRISTALVDNHDLRPLLDWINDSKSYLKKNGSRLEFEARFQQYIELLKASEYEE) constitute a CTLH domain. The RING-Gid-type zinc finger occupies 406-473 (CPVCDKTFAP…GETEVIDPID (68 aa)).

It belongs to the FYV10 family.

It is found in the cytoplasm. The protein localises to the nucleus. Functionally, involved in the proteasome-dependent degradation of fructose-1,6-bisphosphatase. This chain is Protein FYV10 (FYV10), found in Candida glabrata (strain ATCC 2001 / BCRC 20586 / JCM 3761 / NBRC 0622 / NRRL Y-65 / CBS 138) (Yeast).